An 801-amino-acid chain; its full sequence is Probable inorganic carbon transporter subunit DabA (801 aa).

Residues Cys298, Asp300, His481, and Cys496 each contribute to the Zn(2+) site. The tract at residues 575-596 (RENAAAERAESMGSDASSGVSE) is disordered.

This sequence belongs to the inorganic carbon transporter (TC 9.A.2) DabA family. As to quaternary structure, forms a complex with DabB. Requires Zn(2+) as cofactor.

It localises to the cell membrane. In terms of biological role, part of an energy-coupled inorganic carbon pump. This chain is Probable inorganic carbon transporter subunit DabA, found in Haloarcula marismortui (strain ATCC 43049 / DSM 3752 / JCM 8966 / VKM B-1809) (Halobacterium marismortui).